Reading from the N-terminus, the 311-residue chain is Methionyl-tRNA formyltransferase (311 aa).

110 to 113 (SLLP) provides a ligand contact to (6S)-5,6,7,8-tetrahydrofolate.

It belongs to the Fmt family.

The catalysed reaction is L-methionyl-tRNA(fMet) + (6R)-10-formyltetrahydrofolate = N-formyl-L-methionyl-tRNA(fMet) + (6S)-5,6,7,8-tetrahydrofolate + H(+). In terms of biological role, attaches a formyl group to the free amino group of methionyl-tRNA(fMet). The formyl group appears to play a dual role in the initiator identity of N-formylmethionyl-tRNA by promoting its recognition by IF2 and preventing the misappropriation of this tRNA by the elongation apparatus. This is Methionyl-tRNA formyltransferase from Streptococcus pyogenes serotype M28 (strain MGAS6180).